We begin with the raw amino-acid sequence, 498 residues long: ATP synthase subunit beta, chloroplastic (498 aa).

172 to 179 provides a ligand contact to ATP; the sequence is GGAGVGKT.

It belongs to the ATPase alpha/beta chains family. F-type ATPases have 2 components, CF(1) - the catalytic core - and CF(0) - the membrane proton channel. CF(1) has five subunits: alpha(3), beta(3), gamma(1), delta(1), epsilon(1). CF(0) has four main subunits: a(1), b(1), b'(1) and c(9-12).

The protein resides in the plastid. It is found in the chloroplast thylakoid membrane. It carries out the reaction ATP + H2O + 4 H(+)(in) = ADP + phosphate + 5 H(+)(out). Produces ATP from ADP in the presence of a proton gradient across the membrane. The catalytic sites are hosted primarily by the beta subunits. The polypeptide is ATP synthase subunit beta, chloroplastic (Brasenia schreberi (Water shield)).